We begin with the raw amino-acid sequence, 212 residues long: ATP-dependent dethiobiotin synthetase BioD (212 aa).

Position 13-18 (13-18) interacts with ATP; the sequence is GIGKTV. Residue Thr17 participates in Mg(2+) binding. The active site involves Lys33. Residue Ser37 coordinates substrate. Glu100 provides a ligand contact to Mg(2+). ATP-binding positions include 100-103 and 184-186; these read EGAG and PRL.

The protein belongs to the dethiobiotin synthetase family. Homodimer. It depends on Mg(2+) as a cofactor.

It is found in the cytoplasm. The enzyme catalyses (7R,8S)-7,8-diammoniononanoate + CO2 + ATP = (4R,5S)-dethiobiotin + ADP + phosphate + 3 H(+). The protein operates within cofactor biosynthesis; biotin biosynthesis; biotin from 7,8-diaminononanoate: step 1/2. Functionally, catalyzes a mechanistically unusual reaction, the ATP-dependent insertion of CO2 between the N7 and N8 nitrogen atoms of 7,8-diaminopelargonic acid (DAPA, also called 7,8-diammoniononanoate) to form a ureido ring. This chain is ATP-dependent dethiobiotin synthetase BioD, found in Rhodopseudomonas palustris (strain TIE-1).